A 177-amino-acid chain; its full sequence is Ribulose bisphosphate carboxylase small subunit, chloroplastic 4 (177 aa).

A chloroplast-targeting transit peptide spans 1–56 (MASSMMASTAAAVARAGPAQTNMVPFNACRSSVPFPATRKANNDLSTLPSNGGRVS).

Belongs to the RuBisCO small chain family. As to quaternary structure, heterohexadecamer of 8 large and 8 small subunits.

The protein resides in the plastid. The protein localises to the chloroplast. Its function is as follows. RuBisCO catalyzes two reactions: the carboxylation of D-ribulose 1,5-bisphosphate, the primary event in carbon dioxide fixation, as well as the oxidative fragmentation of the pentose substrate. Both reactions occur simultaneously and in competition at the same active site. Although the small subunit is not catalytic it is essential for maximal activity. In Lemna gibba (Swollen duckweed), this protein is Ribulose bisphosphate carboxylase small subunit, chloroplastic 4.